The sequence spans 347 residues: GMP reductase (347 aa).

108-131 serves as a coordination point for NADP(+); sequence ADFEKTQQILSQNPQLNFVCIDVA. Glycine 181 and glycine 183 together coordinate K(+). Cysteine 186 functions as the Thioimidate intermediate in the catalytic mechanism. 216–239 lines the NADP(+) pocket; that stretch reads IISDGGCTMPGDVAKAFGGGADFV.

This sequence belongs to the IMPDH/GMPR family. GuaC type 1 subfamily. Homotetramer.

It catalyses the reaction IMP + NH4(+) + NADP(+) = GMP + NADPH + 2 H(+). Functionally, catalyzes the irreversible NADPH-dependent deamination of GMP to IMP. It functions in the conversion of nucleobase, nucleoside and nucleotide derivatives of G to A nucleotides, and in maintaining the intracellular balance of A and G nucleotides. The protein is GMP reductase of Klebsiella pneumoniae subsp. pneumoniae (strain ATCC 700721 / MGH 78578).